Reading from the N-terminus, the 446-residue chain is Na(+)-translocating NADH-quinone reductase subunit A (446 aa).

This sequence belongs to the NqrA family. As to quaternary structure, composed of six subunits; NqrA, NqrB, NqrC, NqrD, NqrE and NqrF.

The catalysed reaction is a ubiquinone + n Na(+)(in) + NADH + H(+) = a ubiquinol + n Na(+)(out) + NAD(+). Functionally, NQR complex catalyzes the reduction of ubiquinone-1 to ubiquinol by two successive reactions, coupled with the transport of Na(+) ions from the cytoplasm to the periplasm. NqrA to NqrE are probably involved in the second step, the conversion of ubisemiquinone to ubiquinol. The polypeptide is Na(+)-translocating NADH-quinone reductase subunit A (Histophilus somni (strain 2336) (Haemophilus somnus)).